Here is a 95-residue protein sequence, read N- to C-terminus: Large ribosomal subunit protein uL23 (95 aa).

It belongs to the universal ribosomal protein uL23 family. In terms of assembly, part of the 50S ribosomal subunit. Contacts protein L29, and trigger factor when it is bound to the ribosome.

Functionally, one of the early assembly proteins it binds 23S rRNA. One of the proteins that surrounds the polypeptide exit tunnel on the outside of the ribosome. Forms the main docking site for trigger factor binding to the ribosome. The chain is Large ribosomal subunit protein uL23 from Desulforapulum autotrophicum (strain ATCC 43914 / DSM 3382 / VKM B-1955 / HRM2) (Desulfobacterium autotrophicum).